Reading from the N-terminus, the 464-residue chain is MQTVSTEFDTIAAISTPPGEGGISIIRISGVDALKTASQIYRGKDLNKVNSHTINYGHIIDPENGNEVDEVMVSVMRAPHTYTKEDIVEINCHGGIVATNRILQIILGLDARLAKPGEFTERAFLNGRIDLSQAEAVMDLIRAKTDQSMKVALDQLDGNLSHLITNLRQNILDVLAQVEVNIDYPEYDDVETMTARLLKEKAIEVKAKIQQLLSTAKQGKVLRDGLATAIIGHPNVGKSSILNHLLHEDKAIVTDVAGTTRDVIEEYVNVQGVPLKLVDTAGIHETEDKVEKIGVDRSRKALSQADLVILVLDSSVPLRDEDRELLRETNHMQRIVVLNKSDLEVKINLNELQEYVDDKEIIKSSAVSPLGTKDLEDRIAAMFFAGSIENTSNNIMVTNARHIGLLKQADTALDAVLEGIETGMPVDLVQIDMTRTWDLLGEITGDSYQDELLDQLFSQFCLGK.

R27, E89, and R128 together coordinate (6S)-5-formyl-5,6,7,8-tetrahydrofolate. Residues 225–384 (GLATAIIGHP…LEDRIAAMFF (160 aa)) enclose the TrmE-type G domain. Position 235 (N235) interacts with K(+). GTP-binding positions include 235 to 240 (NVGKSS), 254 to 260 (TDVAGTT), and 279 to 282 (DTAG). S239 is a binding site for Mg(2+). K(+)-binding residues include T254, V256, and T259. T260 serves as a coordination point for Mg(2+). K464 is a (6S)-5-formyl-5,6,7,8-tetrahydrofolate binding site.

This sequence belongs to the TRAFAC class TrmE-Era-EngA-EngB-Septin-like GTPase superfamily. TrmE GTPase family. As to quaternary structure, homodimer. Heterotetramer of two MnmE and two MnmG subunits. The cofactor is K(+).

It is found in the cytoplasm. Its function is as follows. Exhibits a very high intrinsic GTPase hydrolysis rate. Involved in the addition of a carboxymethylaminomethyl (cmnm) group at the wobble position (U34) of certain tRNAs, forming tRNA-cmnm(5)s(2)U34. The sequence is that of tRNA modification GTPase MnmE from Pediococcus pentosaceus (strain ATCC 25745 / CCUG 21536 / LMG 10740 / 183-1w).